The sequence spans 96 residues: Small ribosomal subunit protein bS20 (96 aa).

It belongs to the bacterial ribosomal protein bS20 family.

Functionally, binds directly to 16S ribosomal RNA. In Thermotoga petrophila (strain ATCC BAA-488 / DSM 13995 / JCM 10881 / RKU-1), this protein is Small ribosomal subunit protein bS20.